We begin with the raw amino-acid sequence, 339 residues long: Glyceraldehyde-3-phosphate dehydrogenase (339 aa).

NAD(+)-binding positions include 13–14 (RI), aspartate 35, and lysine 84. D-glyceraldehyde 3-phosphate is bound by residues 156-158 (SCT), threonine 187, 216-217 (TG), and arginine 239. The active-site Nucleophile is the cysteine 157. Asparagine 321 contacts NAD(+).

It belongs to the glyceraldehyde-3-phosphate dehydrogenase family. In terms of assembly, homotetramer.

The protein localises to the cytoplasm. The enzyme catalyses D-glyceraldehyde 3-phosphate + phosphate + NAD(+) = (2R)-3-phospho-glyceroyl phosphate + NADH + H(+). It participates in carbohydrate degradation; glycolysis; pyruvate from D-glyceraldehyde 3-phosphate: step 1/5. The protein is Glyceraldehyde-3-phosphate dehydrogenase (G3PD) of Brugia malayi (Filarial nematode worm).